A 466-amino-acid polypeptide reads, in one-letter code: Cysteine--tRNA ligase (466 aa).

Zn(2+) is bound at residue cysteine 29. Residues 31 to 41 carry the 'HIGH' region motif; that stretch reads PTVYNYIHIGN. 3 residues coordinate Zn(2+): cysteine 209, histidine 234, and glutamate 238. Positions 266-270 match the 'KMSKS' region motif; it reads KMSKS. Lysine 269 lines the ATP pocket. Residue serine 270 is modified to Phosphoserine.

Belongs to the class-I aminoacyl-tRNA synthetase family. In terms of assembly, monomer. Requires Zn(2+) as cofactor.

It localises to the cytoplasm. The catalysed reaction is tRNA(Cys) + L-cysteine + ATP = L-cysteinyl-tRNA(Cys) + AMP + diphosphate. This is Cysteine--tRNA ligase from Bacillus pumilus (strain SAFR-032).